We begin with the raw amino-acid sequence, 379 residues long: Chaperone protein DnaJ (379 aa).

Positions 7–72 (DYYEVLGVDK…KKRSMYDQFG (66 aa)) constitute a J domain. A CR-type zinc finger spans residues 147-225 (GKKAELSYTR…CGGNGLERKK (79 aa)). 8 residues coordinate Zn(2+): Cys-160, Cys-163, Cys-177, Cys-180, Cys-199, Cys-202, Cys-213, and Cys-216. CXXCXGXG motif repeat units lie at residues 160-167 (CSECHGTG), 177-184 (CPDCKGTG), 199-206 (CPTCGGEG), and 213-220 (CKKCGGNG).

Belongs to the DnaJ family. Homodimer. Zn(2+) is required as a cofactor.

It is found in the cytoplasm. Participates actively in the response to hyperosmotic and heat shock by preventing the aggregation of stress-denatured proteins and by disaggregating proteins, also in an autonomous, DnaK-independent fashion. Unfolded proteins bind initially to DnaJ; upon interaction with the DnaJ-bound protein, DnaK hydrolyzes its bound ATP, resulting in the formation of a stable complex. GrpE releases ADP from DnaK; ATP binding to DnaK triggers the release of the substrate protein, thus completing the reaction cycle. Several rounds of ATP-dependent interactions between DnaJ, DnaK and GrpE are required for fully efficient folding. Also involved, together with DnaK and GrpE, in the DNA replication of plasmids through activation of initiation proteins. This Treponema denticola (strain ATCC 35405 / DSM 14222 / CIP 103919 / JCM 8153 / KCTC 15104) protein is Chaperone protein DnaJ.